We begin with the raw amino-acid sequence, 852 residues long: Alanine--tRNA ligase (852 aa).

Zn(2+) contacts are provided by H554, H558, C656, and H660.

The protein belongs to the class-II aminoacyl-tRNA synthetase family. Zn(2+) is required as a cofactor.

The protein resides in the cytoplasm. It catalyses the reaction tRNA(Ala) + L-alanine + ATP = L-alanyl-tRNA(Ala) + AMP + diphosphate. Functionally, catalyzes the attachment of alanine to tRNA(Ala) in a two-step reaction: alanine is first activated by ATP to form Ala-AMP and then transferred to the acceptor end of tRNA(Ala). Also edits incorrectly charged Ser-tRNA(Ala) and Gly-tRNA(Ala) via its editing domain. The polypeptide is Alanine--tRNA ligase (Campylobacter curvus (strain 525.92)).